The following is a 116-amino-acid chain: Transcription elongation factor SPT4 homolog 1 (116 aa).

A C4-type zinc finger spans residues 19 to 39 (CLRCRLVKTYDQFRDSGCENC).

The protein belongs to the SPT4 family.

Its subcellular location is the nucleus. Functionally, may regulate transcription elongation by RNA polymerase II. May enhance transcriptional pausing at sites proximal to the promoter, which may in turn facilitate the assembly of an elongation competent RNA polymerase II complex. In Arabidopsis thaliana (Mouse-ear cress), this protein is Transcription elongation factor SPT4 homolog 1.